A 2946-amino-acid polypeptide reads, in one-letter code: Neurobeachin (2946 aa).

A disordered region spans residues 971 to 995 (ENIKKGKKGNVSTISGLSSQTTGAK). The segment covering 980 to 993 (NVSTISGLSSQTTG) has biased composition (polar residues). A phosphoserine mark is found at Ser-1011 and Ser-1014. The stretch at 1326–1368 (TTMFRIPEFKWSPMHQRLLTDLLFALETDVHVWRSHSTKSVMD) is one WD 1 repeat. Disordered stretches follow at residues 1490–1531 (QRDR…LSPI), 1651–1675 (TIKE…HTDS), 1711–1731 (VKKS…PATS), and 1841–1860 (GAVD…VNGA). A compositionally biased stretch (polar residues) spans 1497 to 1517 (SSHGSSKPQEVPQSVTATAAS). Ser-1529 bears the Phosphoserine mark. 2 positions are modified to phosphoserine: Ser-1714 and Ser-1717. The span at 1716–1731 (ESLTENPSETLKPATS) shows a compositional bias: polar residues. Residues 1845–1855 (SGSSSSSSSSS) are compositionally biased toward low complexity. Residue Ser-2138 is modified to Phosphoserine. The BEACH-type PH domain occupies 2147–2255 (NLAGPVVLST…TVKKVVYSLP (109 aa)). In terms of domain architecture, BEACH spans 2274-2563 (ATPRQLYKSS…QLLIEPHPPR (290 aa)). Ser-2575 bears the Phosphoserine mark. 4 WD repeats span residues 2718-2761 (GHWD…HIIG), 2778-2818 (GHDH…RALE), 2860-2899 (EIND…QLYI), and 2902-2941 (GCDA…WHYE).

This sequence belongs to the WD repeat neurobeachin family. As to quaternary structure, interacts with RII subunit of PKA. In terms of tissue distribution, predominant in many brain structures. Also expressed at medium levels in spleen, thymus, prostate, testis and ovary. Low level expression is seen in heart, kidney, pancreas, skeletal muscle and intestine.

It localises to the cytoplasm. The protein resides in the membrane. Its function is as follows. Binds to type II regulatory subunits of protein kinase A and anchors/targets them to the membrane. May anchor the kinase to cytoskeletal and/or organelle-associated proteins. In Homo sapiens (Human), this protein is Neurobeachin.